We begin with the raw amino-acid sequence, 251 residues long: Sugar fermentation stimulation protein homolog (251 aa).

The protein belongs to the SfsA family.

In Yersinia pseudotuberculosis serotype O:1b (strain IP 31758), this protein is Sugar fermentation stimulation protein homolog.